The chain runs to 172 residues: UPF0398 protein gbs0290 (172 aa).

The protein belongs to the UPF0398 family.

The protein is UPF0398 protein gbs0290 of Streptococcus agalactiae serotype III (strain NEM316).